The following is a 645-amino-acid chain: MVGFAWLPPETNSLRMYLGAGSRPLLAAAGAWDGLAEELHAAASSFGSVTSELAGGAWQGPASAAMANAAGPYASWLTAAGAQAELAARQARAAAGAFEEALAGVVHPAVVQANRVRTWLLAVSNVFGQNAPAIAAMESTYEQMWAQDVAVMAGYHAASSAAAAQLASWQPALPNINLGVGNIGNLNVGNGNTGDYNLGNGNLGNANFGGGNGSAFHGQISSFNVGSGNIGNFNLGSGNGNVGIGPSSFNVGSGNIGNANVGGGNSGDNNFGFGNFGNANIGIGNAGPNMSSPAVPTPGNGNVGIGNGGNGNFGGGNTGNANIGLGNVGDGNVGFGNSGSYNFGFGNTGNNNIGIGLTGSNQIGFGGLNSGSGNIGFGNSGTGNIGFFNSGSGNFGVGNSGVTNTGVANSGNINTGFGNSGFINTGFGNALSVNTGFGNSGQANTGIGNAGDFNTGNFNGGIINTGSFNSGAFNSGSFNGGDANSGFLNSGLTNTGFANSGNINTGGFNAGNLNTGFGNTTDGLGENSGFGNAGSGNSGFNNSGRGNSGAQNVGNLQISGFANSGQSVTGYNNSVSVTSGFGNKGTGLFSGFMSGFGNTGFLQSGFGNLEANPDNNSATSGFGNSGKQDSGGFNSIDFVSGFFHR.

The protein belongs to the mycobacterial PPE family.

This is an uncharacterized protein from Mycobacterium tuberculosis (strain CDC 1551 / Oshkosh).